The chain runs to 184 residues: Cbp/p300-interacting transactivator 4 (184 aa).

The span at 18–28 (PSAAAAHGPHA) shows a compositional bias: low complexity. Disordered stretches follow at residues 18–67 (PSAA…YGAF) and 94–128 (TPYP…PAHA). Residues 104 to 126 (PNAPGGPPGPQPAPSAAAPPPPA) show a composition bias toward pro residues.

This sequence belongs to the CITED family. Interacts via its C-terminal region with the CH1 domain of CREBBP and EP300. Interacts with all TFAP2/AP-2 isoforms. As to expression, expressed in most tissues examined with highest levels of expression in heart, liver, skeletal muscle and pancreas. Also expressed in bladder cell line ECV-304 and in various breast cancer cell lines. Also detected in both in situ and invasive breast tumors where its expression is down-regulated and mostly restricted to the cytoplasm of malignant epithelium. Down-regulation of expression is associated with elevated levels of HIF1A and increased tumor growth and angiogenesis.

Its subcellular location is the nucleus. The protein localises to the cytoplasm. In terms of biological role, acts as a transcriptional coactivator for TFAP2/AP-2. Enhances estrogen-dependent transactivation mediated by estrogen receptors. May function as an inhibitor of transactivation by HIF1A by disrupting HIF1A interaction with CREBBP. May be involved in regulation of gene expression during development and differentiation of blood cells, endothelial cells and mammary epithelial cells. This chain is Cbp/p300-interacting transactivator 4, found in Homo sapiens (Human).